A 358-amino-acid polypeptide reads, in one-letter code: MSKRKFKEELLEALVPEIYGPAADVKPDIKPRVLKRVKKREKKEEKEEAGLLDDGVEFVRSFAPRRRVQWRGRKVQRVLRPGTTVVFTPGERSVTRALKRDYDEVYADEDILEQAAQQVGEFAYGKRGRYGELGLLLDQSNPTPSLKPATAQQILPVTEIKRGVKRENKDELQPTMQLMVPKRQKLEEVLENMKVDPSVEPEVKVRPIKEIGPGLGVQTVDIQIPVRASSSTVSTAVEAMETQPELPEAVARAVAATREMGLQTDPWYEFVAPTSRPRSRKYTTANSILPEYALHPSITPTPGYRGTTFKPSRTRSTRRRRSVRRRSRRTAPISVRRVTRRGRTLTLPNARYHPSILV.

Residues 296–331 (PSITPTPGYRGTTFKPSRTRSTRRRRSVRRRSRRTA) form a disordered region. Positions 312–329 (SRTRSTRRRRSVRRRSRR) are enriched in basic residues.

The protein belongs to the adenoviridae core-capsid bridging protein family. As to quaternary structure, monomer. Homodimer. Exists in equilibrium between monomers and dimers in solution. Interacts with the histone-like nucleoprotein; this interactions bridge the virus core to the capsid. Interacts with core protein X; this interactions bridge the virus core to the capsid. Interacts with the endosome lysis protein VI; this interactions bridge the virus core to the capsid. Interacts with the peripentonal hexons. Interacts with host NPM1; this interaction might play a role in virus assembly.

It localises to the virion. The protein localises to the host nucleus. The protein resides in the host nucleolus. Its function is as follows. Associates loosely with the viral DNA to form an outer shell around the nucleoprotein-DNA complex and links it with the capsid by binding the endosome lysis protein. Dissociates from the viral genome during entry. Might be involved in nuclear capsid assembly of the viral particles through its association with NPM1/nucleophosmin. This is Core-capsid bridging protein from Human adenovirus F serotype 40 (HAdV-40).